Consider the following 374-residue polypeptide: Glutamate 5-kinase (374 aa).

Residue lysine 9 participates in ATP binding. Residues serine 49, aspartate 136, and asparagine 148 each contribute to the substrate site. Residues 168 to 169 (TD) and 210 to 216 (TGGMKSK) contribute to the ATP site. Positions 276–354 (SGVVRIDQGA…DEAKQLIPLV (79 aa)) constitute a PUA domain.

This sequence belongs to the glutamate 5-kinase family.

It is found in the cytoplasm. The enzyme catalyses L-glutamate + ATP = L-glutamyl 5-phosphate + ADP. The protein operates within amino-acid biosynthesis; L-proline biosynthesis; L-glutamate 5-semialdehyde from L-glutamate: step 1/2. Functionally, catalyzes the transfer of a phosphate group to glutamate to form L-glutamate 5-phosphate. The protein is Glutamate 5-kinase of Halalkalibacterium halodurans (strain ATCC BAA-125 / DSM 18197 / FERM 7344 / JCM 9153 / C-125) (Bacillus halodurans).